A 459-amino-acid polypeptide reads, in one-letter code: MTAEEMKATESGAQSAPLPMEGVDISPKQDEGVLKVIKREGTGTEMPMIGDRVFVHYTGWLLDGTKFDSSLDRKDKFSFDLGKGEVIKAWDIAIATMKVGEVCHITCKPEYAYGSAGSPPKIPPNATLVFEVELFEFKGEDLTEEEDGGIIRRIQTRGEGYAKPNEGAIVEVALEGYYKDKLFDQRELRFEIGEGENLDLPYGLERAIQRMEKGEHSIVYLKPSYAFGSVGKEKFQIPPNAELKYELHLKSFEKAKESWEMNSEEKLEQSTIVKERGTVYFKEGKYKQALLQYKKIVSWLEYESSFSNEEAQKAQALRLASHLNLAMCHLKLQAFSAAIESCNKALELDSNNEKGLFRRGEAHLAVNDFELARADFQKVLQLYPNNKAAKTQLAVCQQRIRRQLAREKKLYANMFERLAEEENKAKAEASSGDHPTDTEMKEEQKSNTAGSQSQVETEA.

Met-1 carries the post-translational modification N-acetylmethionine; in peptidyl-prolyl cis-trans isomerase FKBP4; alternate. The segment at 1–24 (MTAEEMKATESGAQSAPLPMEGVD) is disordered. Position 2 is an N-acetylthreonine; in peptidyl-prolyl cis-trans isomerase FKBP4, N-terminally processed; partial (Thr-2). Residues 50–138 (GDRVFVHYTG…VFEVELFEFK (89 aa)) form the PPIase FKBP-type 1 domain. Thr-143 carries the phosphothreonine; by CK2 modification. Residues 167–253 (GAIVEVALEG…KYELHLKSFE (87 aa)) enclose the PPIase FKBP-type 2 domain. Tyr-220 carries the phosphotyrosine modification. The interaction with tubulin stretch occupies residues 267 to 400 (LEQSTIVKER…TQLAVCQQRI (134 aa)). TPR repeat units lie at residues 270-303 (STIVKERGTVYFKEGKYKQALLQYKKIVSWLEYE), 319-352 (LASHLNLAMCHLKLQAFSAAIESCNKALELDSNN), and 353-386 (EKGLFRRGEAHLAVNDFELARADFQKVLQLYPNN). Position 282 is an N6-acetyllysine (Lys-282). At Arg-373 the chain carries Omega-N-methylarginine. The segment at 421–459 (EENKAKAEASSGDHPTDTEMKEEQKSNTAGSQSQVETEA) is disordered. Over residues 434–445 (HPTDTEMKEEQK) the composition is skewed to basic and acidic residues. Residue Thr-436 is modified to Phosphothreonine. Lys-441 is covalently cross-linked (Glycyl lysine isopeptide (Lys-Gly) (interchain with G-Cter in SUMO1)). A compositionally biased stretch (polar residues) spans 446–459 (SNTAGSQSQVETEA). Residues Ser-451 and Ser-453 each carry the phosphoserine modification.

Homodimer. Interacts with GLMN. Associates with HSP90AA1 and HSP70 in steroid hormone receptor complexes. Also interacts with peroxisomal phytanoyl-CoA alpha-hydroxylase (PHYH). Interacts with NR3C1 and dynein. Interacts with HSF1 in the HSP90 complex. Associates with tubulin. Interacts with MAPT/TAU. Interacts (via TPR domain) with S100A1, S100A2 and S100A6; the interaction is Ca(2+) dependent. Interaction with S100A1 and S100A2 (but not with S100A6) leads to inhibition of FKBP4-HSP90 interaction. Interacts with dynein; causes partially NR3C1 transport to the nucleus. Post-translationally, phosphorylation by CK2 results in loss of HSP90 binding activity. Widely expressed.

It is found in the cytoplasm. The protein localises to the cytosol. Its subcellular location is the mitochondrion. The protein resides in the nucleus. It localises to the cytoskeleton. It is found in the cell projection. The protein localises to the axon. The enzyme catalyses [protein]-peptidylproline (omega=180) = [protein]-peptidylproline (omega=0). Inhibited by FK506. Functionally, immunophilin protein with PPIase and co-chaperone activities. Component of steroid receptors heterocomplexes through interaction with heat-shock protein 90 (HSP90). May play a role in the intracellular trafficking of heterooligomeric forms of steroid hormone receptors between cytoplasm and nuclear compartments. The isomerase activity controls neuronal growth cones via regulation of TRPC1 channel opening. Also acts as a regulator of microtubule dynamics by inhibiting MAPT/TAU ability to promote microtubule assembly. May have a protective role against oxidative stress in mitochondria. This chain is Peptidyl-prolyl cis-trans isomerase FKBP4 (FKBP4), found in Homo sapiens (Human).